The chain runs to 56 residues: MAVPARRTSKAKKNKRRTHKGLTAPGLSRDSETGEYRMSHRISPDGTYKGRTIIEK.

The disordered stretch occupies residues 1 to 56; that stretch reads MAVPARRTSKAKKNKRRTHKGLTAPGLSRDSETGEYRMSHRISPDGTYKGRTIIEK. Basic residues predominate over residues 7 to 20; that stretch reads RTSKAKKNKRRTHK. The span at 29-38 shows a compositional bias: basic and acidic residues; that stretch reads RDSETGEYRM.

Belongs to the bacterial ribosomal protein bL32 family.

The protein is Large ribosomal subunit protein bL32A (rpmF1) of Listeria innocua serovar 6a (strain ATCC BAA-680 / CLIP 11262).